The following is a 489-amino-acid chain: Betaine aldehyde dehydrogenase (489 aa).

K(+)-binding residues include threonine 26 and aspartate 93. 150-152 (GAW) contributes to the NAD(+) binding site. Lysine 162 functions as the Charge relay system in the catalytic mechanism. An NAD(+)-binding site is contributed by 176–179 (KPSE). Valine 180 is a binding site for K(+). 229–232 (GVET) contributes to the NAD(+) binding site. Residue leucine 245 coordinates K(+). The active-site Proton acceptor is the glutamate 251. Positions 253, 285, and 386 each coordinate NAD(+). The Nucleophile role is filled by cysteine 285. The residue at position 285 (cysteine 285) is a Cysteine sulfenic acid (-SOH). Positions 456 and 459 each coordinate K(+). Residue glutamate 463 is the Charge relay system of the active site.

Belongs to the aldehyde dehydrogenase family. Dimer of dimers. The cofactor is K(+).

The catalysed reaction is betaine aldehyde + NAD(+) + H2O = glycine betaine + NADH + 2 H(+). It functions in the pathway amine and polyamine biosynthesis; betaine biosynthesis via choline pathway; betaine from betaine aldehyde: step 1/1. Its function is as follows. Involved in the biosynthesis of the osmoprotectant glycine betaine. Catalyzes the irreversible oxidation of betaine aldehyde to the corresponding acid. The protein is Betaine aldehyde dehydrogenase of Burkholderia pseudomallei (strain 1106a).